Reading from the N-terminus, the 718-residue chain is Protein ENHANCED DISEASE RESISTANCE 2 (718 aa).

In terms of domain architecture, PH spans 3 to 110 (KVVYEGWMVR…WKEKIESVID (108 aa)). Residues 134–174 (TGRTASSSDHESQFSAAEDEEDSRRSLMRRTTIGNGPPESV) form a disordered region. Residues 180 to 392 (EFDAELANQN…VAGLREWFSQ (213 aa)) form the START domain. The segment at 437–483 (RNSLLMDEDSDDDDEFQIAESEQEPETSKPETDVKRPEEEPAHNIDL) is disordered. The span at 442 to 461 (MDEDSDDDDEFQIAESEQEP) shows a compositional bias: acidic residues. Positions 462–479 (ETSKPETDVKRPEEEPAH) are enriched in basic and acidic residues. Residues 664–684 (GVLGLVIGVITSLVVEMAFLV) traverse the membrane as a helical segment.

Expressed ubiquitously in all tissues and organs, including leaves, roots, flowers, stems and siliques.

The protein resides in the endoplasmic reticulum membrane. It is found in the cell membrane. Its subcellular location is the endosome membrane. Negative regulator of the salicylic acid- (SA-) mediated resistance to pathogens, including the biotrophic powdery mildew pathogens Golovinomyces cichoracearum and Blumeria graminis, and the downy mildew pathogen Hyaloperonospora parasitica, probably by limiting the initiation of cell death and the establishment of the hypersensitive response (HR). Prevents ethylene-induced senescence. Binds to phosphatidylinositol-4-phosphate (PtdIns(4)P) in vitro. The chain is Protein ENHANCED DISEASE RESISTANCE 2 (EDR2) from Arabidopsis thaliana (Mouse-ear cress).